An 801-amino-acid chain; its full sequence is Probable inorganic carbon transporter subunit DabA (801 aa).

Zn(2+) is bound by residues cysteine 332, aspartate 334, histidine 500, and cysteine 515.

This sequence belongs to the inorganic carbon transporter (TC 9.A.2) DabA family. Forms a complex with DabB. It depends on Zn(2+) as a cofactor.

The protein localises to the cell inner membrane. Functionally, part of an energy-coupled inorganic carbon pump. The protein is Probable inorganic carbon transporter subunit DabA of Marinobacter nauticus (strain ATCC 700491 / DSM 11845 / VT8) (Marinobacter aquaeolei).